Consider the following 144-residue polypeptide: Subtilase-type protease inhibitor (144 aa).

An N-terminal signal peptide occupies residues 1 to 35 (MRNTARWAATLGLTATAVCGPLAGASLASPATAPA). Intrachain disulfides connect Cys-66–Cys-81 and Cys-102–Cys-132.

Belongs to the protease inhibitor I16 (SSI) family. As to quaternary structure, homodimer.

The protein resides in the secreted. In terms of biological role, strong inhibitory activity toward subtilisin BPN' and, to a lesser extent, toward trypsin. This is Subtilase-type protease inhibitor (sti1) from Streptomyces coelicolor (strain ATCC BAA-471 / A3(2) / M145).